The following is a 138-amino-acid chain: Transcription antitermination protein NusB (138 aa).

This sequence belongs to the NusB family.

Involved in transcription antitermination. Required for transcription of ribosomal RNA (rRNA) genes. Binds specifically to the boxA antiterminator sequence of the ribosomal RNA (rrn) operons. This Helicobacter pylori (strain J99 / ATCC 700824) (Campylobacter pylori J99) protein is Transcription antitermination protein NusB.